A 158-amino-acid chain; its full sequence is Ribonuclease H (158 aa).

The region spanning 5–146 (MRKQIEIFTD…CDQLAKQGAE (142 aa)) is the RNase H type-1 domain. 4 residues coordinate Mg(2+): Asp-14, Glu-52, Asp-74, and Asp-138.

This sequence belongs to the RNase H family. As to quaternary structure, monomer. Requires Mg(2+) as cofactor.

Its subcellular location is the cytoplasm. The enzyme catalyses Endonucleolytic cleavage to 5'-phosphomonoester.. Its function is as follows. Endonuclease that specifically degrades the RNA of RNA-DNA hybrids. The polypeptide is Ribonuclease H (Mannheimia succiniciproducens (strain KCTC 0769BP / MBEL55E)).